A 289-amino-acid chain; its full sequence is MQGVYPAIITPLKENKVDYDGLRNNIDFLIENGVSGVIPVGTTGESPTLTPLEHEKVVEKVVEFVDGRVEVIAGTGSNSTSEALEFSQYAEDVGVDGVLLITPYYNKPTQEGLKRHFGEIANSINVPIVLYNVPSRTALNIEPETIKYLFNEYSNISAVKEANPNLSQVSEVLDSCDIDILSGNDELTLPIISLGGKGVVSVIANIAPKEFVQMVDFANAGKFDKAKEIHYKLFPLMKLMFVETNPIPIKTAMNMLGMPSGELRLPLCEMAESNKLKLQNALNNLGLLK.

A pyruvate-binding site is contributed by T43. Catalysis depends on Y131, which acts as the Proton donor/acceptor. K160 serves as the catalytic Schiff-base intermediate with substrate. V200 contacts pyruvate.

Belongs to the DapA family. In terms of assembly, homotetramer; dimer of dimers.

It is found in the cytoplasm. The enzyme catalyses L-aspartate 4-semialdehyde + pyruvate = (2S,4S)-4-hydroxy-2,3,4,5-tetrahydrodipicolinate + H2O + H(+). Its pathway is amino-acid biosynthesis; L-lysine biosynthesis via DAP pathway; (S)-tetrahydrodipicolinate from L-aspartate: step 3/4. Its function is as follows. Catalyzes the condensation of (S)-aspartate-beta-semialdehyde [(S)-ASA] and pyruvate to 4-hydroxy-tetrahydrodipicolinate (HTPA). The protein is 4-hydroxy-tetrahydrodipicolinate synthase of Methanococcus maripaludis (strain DSM 14266 / JCM 13030 / NBRC 101832 / S2 / LL).